The sequence spans 297 residues: ATP synthase gamma chain (297 aa).

It belongs to the ATPase gamma chain family. F-type ATPases have 2 components, CF(1) - the catalytic core - and CF(0) - the membrane proton channel. CF(1) has five subunits: alpha(3), beta(3), gamma(1), delta(1), epsilon(1). CF(0) has three main subunits: a, b and c.

It is found in the cell membrane. Produces ATP from ADP in the presence of a proton gradient across the membrane. The gamma chain is believed to be important in regulating ATPase activity and the flow of protons through the CF(0) complex. In Micrococcus luteus (strain ATCC 4698 / DSM 20030 / JCM 1464 / CCM 169 / CCUG 5858 / IAM 1056 / NBRC 3333 / NCIMB 9278 / NCTC 2665 / VKM Ac-2230) (Micrococcus lysodeikticus), this protein is ATP synthase gamma chain.